We begin with the raw amino-acid sequence, 141 residues long: Hemoglobin subunit alpha (141 aa).

Residues 1 to 141 (VLSPTDKTNV…VSTVLTSKYR (141 aa)) form the Globin domain. A Phosphoserine modification is found at serine 3. Lysine 7 carries the post-translational modification N6-succinyllysine. Threonine 8 carries the post-translational modification Phosphothreonine. Lysine 11 is modified (N6-succinyllysine). Tyrosine 24 is modified (phosphotyrosine). Serine 35 bears the Phosphoserine mark. Lysine 40 bears the N6-succinyllysine mark. Phosphoserine is present on serine 49. Histidine 58 is an O2 binding site. A heme b-binding site is contributed by histidine 87. Serine 102 carries the post-translational modification Phosphoserine. Threonine 108 bears the Phosphothreonine mark. At serine 124 the chain carries Phosphoserine. A phosphothreonine mark is found at threonine 134 and threonine 137. Residue serine 138 is modified to Phosphoserine.

The protein belongs to the globin family. In terms of assembly, heterotetramer of two alpha chains and two beta chains. As to expression, red blood cells.

Its function is as follows. Involved in oxygen transport from the lung to the various peripheral tissues. Hemopressin acts as an antagonist peptide of the cannabinoid receptor CNR1. Hemopressin-binding efficiently blocks cannabinoid receptor CNR1 and subsequent signaling. The polypeptide is Hemoglobin subunit alpha (HBA) (Rhinoceros unicornis (Greater Indian rhinoceros)).